The chain runs to 1062 residues: NACHT, LRR and PYD domains-containing protein 2 (1062 aa).

Residues Met1 to Glu94 enclose the Pyrin domain. One can recognise an NACHT domain in the interval Tyr207–Asp526. ATP is bound at residue Gly213 to Thr220. Ser671 is modified (phosphoserine). 8 LRR repeats span residues Ser812 to Tyr832, Phe841 to Ala861, Glu869 to Cys889, Lys898 to Thr918, Ser926 to Cys946, Asn955 to Ser976, Ser983 to Phe1003, and Ser1010 to Glu1033.

This sequence belongs to the NLRP family. Interacts with CHUK. Interacts with IKBKB. Interacts with IKBKG. Interacts with MEFV. Interacts with PYCARD. Interacts (via pyrin domain) with PYDC2. Interacts with CARD8. As to expression, expressed at high levels in lung, placenta and thymus and at lower levels in ovary, intestine and brain. Highly abundant in oocytes and early embryos, however poorly expressed in somatic tissues such as brain, kidney, liver and spinal cord.

It is found in the cytoplasm. Suppresses TNF- and CD40-induced NFKB1 activity at the level of the IKK complex, by inhibiting NFKBIA degradation induced by TNF. When associated with PYCARD, activates CASP1, leading to the secretion of mature pro-inflammatory cytokine IL1B. May be a component of the inflammasome, a protein complex which also includes PYCARD, CARD8 and CASP1 and whose function would be the activation of pro-inflammatory caspases. The polypeptide is NACHT, LRR and PYD domains-containing protein 2 (NLRP2) (Homo sapiens (Human)).